Consider the following 441-residue polypeptide: 2-oxoisovalerate dehydrogenase subunit alpha, mitochondrial (441 aa).

The transit peptide at 1–17 directs the protein to the mitochondrion; sequence MISQSYRILSRISRNNE. Thiamine diphosphate is bound at residue 145-147; sequence QYR. Serine 194, threonine 199, and glutamine 200 together coordinate K(+).

The protein belongs to the BCKDHA family. Heterotetramer of alpha and beta chains. The cofactor is thiamine diphosphate.

Its subcellular location is the mitochondrion matrix. It catalyses the reaction N(6)-[(R)-lipoyl]-L-lysyl-[protein] + 3-methyl-2-oxobutanoate + H(+) = N(6)-[(R)-S(8)-2-methylpropanoyldihydrolipoyl]-L-lysyl-[protein] + CO2. Functionally, the branched-chain alpha-keto dehydrogenase complex catalyzes the overall conversion of alpha-keto acids to acyl-CoA and CO(2). It contains multiple copies of three enzymatic components: branched-chain alpha-keto acid decarboxylase (E1), lipoamide acyltransferase (E2) and lipoamide dehydrogenase (E3). The sequence is that of 2-oxoisovalerate dehydrogenase subunit alpha, mitochondrial (bkdA) from Dictyostelium discoideum (Social amoeba).